Here is a 55-residue protein sequence, read N- to C-terminus: Large ribosomal subunit protein bL33 (55 aa).

Belongs to the bacterial ribosomal protein bL33 family.

The protein is Large ribosomal subunit protein bL33 of Paramagnetospirillum magneticum (strain ATCC 700264 / AMB-1) (Magnetospirillum magneticum).